The primary structure comprises 480 residues: 3-isopropylmalate dehydratase large subunit (480 aa).

Cys-360, Cys-418, and Cys-421 together coordinate [4Fe-4S] cluster.

This sequence belongs to the aconitase/IPM isomerase family. LeuC type 1 subfamily. As to quaternary structure, heterodimer of LeuC and LeuD. [4Fe-4S] cluster is required as a cofactor.

The enzyme catalyses (2R,3S)-3-isopropylmalate = (2S)-2-isopropylmalate. It functions in the pathway amino-acid biosynthesis; L-leucine biosynthesis; L-leucine from 3-methyl-2-oxobutanoate: step 2/4. In terms of biological role, catalyzes the isomerization between 2-isopropylmalate and 3-isopropylmalate, via the formation of 2-isopropylmaleate. The chain is 3-isopropylmalate dehydratase large subunit from Anaeromyxobacter dehalogenans (strain 2CP-1 / ATCC BAA-258).